A 547-amino-acid chain; its full sequence is MAAKDVKFGNDARVKMLKGVNVLADAVKVTLGPKGRNVVLDKAYGAPTITKDGVSVAREIELEDKFENMGAQMVKEVASKANDAAGDGTTTATVLAQAIVNEGLKAVAAGMNPMDLKRGIDKAVVAVVEELKAISKPCETSKEIEQVGTISANSDETVGKLIAQAMEKVGKEGVITVEDGTGLDDALDVVEGMQFDRGYLSPYFINKPEAGTVELENPYIILVDKKISNIREILPVLEAVAKAGKPLLIVAEDIEGEALATLVVNTMRGIVKVAAVKAPGFGDRRKAMLQDIAILTAGTVISEEIGMELEKATLEELGQAKRVVITKDNTTIIDGIGDEAQIKARVAQIRQQIEDSTSDYDKEKLQERVAKLAGGVAVIKVGAATEVAMKEKKDRVDDALHATRAAVEEGIVPGGGVALVRAASKVATTLTGDNEEQNVGIKLALRAMEAPLRQIVTNAGEEASVVARNVKDGNGNYGYNAGTEQYGDMLEMGILDPTKVTRSALQFAASIAGLMITTECMITDLPKEEKLDPAAAMGGMGGMGGMM.

ATP contacts are provided by residues 30–33, lysine 51, 87–91, glycine 415, and aspartate 496; these read TLGP and DGTTT.

This sequence belongs to the chaperonin (HSP60) family. Forms a cylinder of 14 subunits composed of two heptameric rings stacked back-to-back. Interacts with the co-chaperonin GroES.

The protein localises to the cytoplasm. The enzyme catalyses ATP + H2O + a folded polypeptide = ADP + phosphate + an unfolded polypeptide.. Functionally, together with its co-chaperonin GroES, plays an essential role in assisting protein folding. The GroEL-GroES system forms a nano-cage that allows encapsulation of the non-native substrate proteins and provides a physical environment optimized to promote and accelerate protein folding. The protein is Chaperonin GroEL of Actinobacillus pleuropneumoniae serotype 7 (strain AP76).